Consider the following 156-residue polypeptide: Cyanate hydratase (156 aa).

Active-site residues include R96, E99, and S122.

This sequence belongs to the cyanase family.

The catalysed reaction is cyanate + hydrogencarbonate + 3 H(+) = NH4(+) + 2 CO2. In terms of biological role, catalyzes the reaction of cyanate with bicarbonate to produce ammonia and carbon dioxide. This Burkholderia mallei (strain NCTC 10247) protein is Cyanate hydratase.